The sequence spans 280 residues: Probable endonuclease 4 (280 aa).

Zn(2+) contacts are provided by His69, His109, Glu145, Asp179, His182, His216, Asp229, His231, and Glu261.

It belongs to the AP endonuclease 2 family. Zn(2+) is required as a cofactor.

The catalysed reaction is Endonucleolytic cleavage to 5'-phosphooligonucleotide end-products.. Endonuclease IV plays a role in DNA repair. It cleaves phosphodiester bonds at apurinic or apyrimidinic (AP) sites, generating a 3'-hydroxyl group and a 5'-terminal sugar phosphate. The sequence is that of Probable endonuclease 4 from Actinobacillus pleuropneumoniae serotype 7 (strain AP76).